We begin with the raw amino-acid sequence, 324 residues long: Tetrachlorobenzoquinone reductase (324 aa).

One can recognise an FAD-binding FR-type domain in the interval 5–107 (VSTIDMTVTQ…VPPANNFALV (103 aa)). The region spanning 238–324 (FTVVLARRSG…SKSPRLVLDI (87 aa)) is the 2Fe-2S ferredoxin-type domain. 4 residues coordinate [2Fe-2S] cluster: Cys-273, Cys-278, Cys-281, and Cys-311.

Belongs to the PDR/VanB family. In terms of assembly, homotrimer. Requires FMN as cofactor. [2Fe-2S] cluster is required as a cofactor.

It carries out the reaction 2,3,5,6-tetrachlorohydroquinone + NAD(+) + H(+) = 2,3,5,6-tetrachloro-1,4-benzoquinone + NADH. It functions in the pathway xenobiotic degradation; pentachlorophenol degradation. In vitro, activated by tetrachlorohydroquinone (TCHQ) at low concentrations and inhibited at high concentrations (above 200 uM). However, PcpD would only be stimulated by tetrachlorohydroquinone (TCHQ) under in vivo conditions due to the toxicity of tetrachlorohydroquinone (TCHQ). Competitively inhibited by pentachlorophenol (PCP) in a concentration-dependent manner. PcpD is regulated by tetrachlorohydroquinone (TCHQ) and pentachlorophenol (PCP) using a mechanism, which maintains tetrachlorobenzoquinone at a level that would neither significantly decrease the biodegradation of pentachlorophenol (PCP) nor cause cytotoxicity in cells. Functionally, involved in the degradation of the xenobiocide pentachlorophenol (PCP). Catalyzes the reduction of tetrachlorobenzoquinone (TCBQ) to yield tetrachlorohydroquinone (TCHQ). Also able to reduce 2,6-dichloroindophenol (DCIP). The protein is Tetrachlorobenzoquinone reductase of Sphingobium chlorophenolicum.